A 183-amino-acid chain; its full sequence is NADH-quinone oxidoreductase subunit I (183 aa).

4Fe-4S ferredoxin-type domains are found at residues 44–74 and 90–119; these read LNRW…VEAG and RVYQ…MTNE. Positions 54, 57, 60, 64, 99, 102, 105, and 109 each coordinate [4Fe-4S] cluster. A disordered region spans residues 143–183; it reads QGMEAPPHPMRLGETEKDYYRLGRDDNAAARADEQNSEAVQ. A compositionally biased stretch (basic and acidic residues) spans 153–176; it reads RLGETEKDYYRLGRDDNAAARADE.

Belongs to the complex I 23 kDa subunit family. As to quaternary structure, NDH-1 is composed of 14 different subunits. Subunits NuoA, H, J, K, L, M, N constitute the membrane sector of the complex. The cofactor is [4Fe-4S] cluster.

The protein localises to the cell membrane. The enzyme catalyses a quinone + NADH + 5 H(+)(in) = a quinol + NAD(+) + 4 H(+)(out). In terms of biological role, NDH-1 shuttles electrons from NADH, via FMN and iron-sulfur (Fe-S) centers, to quinones in the respiratory chain. The immediate electron acceptor for the enzyme in this species is believed to be ubiquinone. Couples the redox reaction to proton translocation (for every two electrons transferred, four hydrogen ions are translocated across the cytoplasmic membrane), and thus conserves the redox energy in a proton gradient. In Thermobifida fusca (strain YX), this protein is NADH-quinone oxidoreductase subunit I.